A 100-amino-acid chain; its full sequence is MRSILYAVLAFAVLARSSAVAAFPIPDESRPLSKTSPDTGATRSLRVEAQEVIQSGRGDGYGGFWKNVFPSTNKIIKKPDIKISKLIAAAKKAKAKMTKS.

The N-terminal stretch at 1–22 (MRSILYAVLAFAVLARSSAVAA) is a signal peptide. A RxLR-dEER motif is present at residues 43 to 57 (RSLRVEAQEVIQSGR). Residues 78–82 (KPDIK) carry the Calmodulin-binding motif motif.

It belongs to the RxLR effector family. In terms of assembly, interacts with the host calmodulin.

The protein resides in the secreted. The protein localises to the host nucleus. It localises to the host cytoplasm. Effector that suppresses flg22-induced post-translational MAP kinase activation both tomato and Arabidopsis. The perception of highly conserved pathogen- or microbe-associated molecular patterns (PAMPs/MAMPs), such as flg22, triggers converging signaling pathways recruiting MAP kinase cascades and inducing transcriptional re-programming, yielding a generic antimicrobial response. Associates with calmodulin to interfere with plant defense-associated calcium signaling in hosts. The sequence is that of RxLR effector protein SFI8 from Phytophthora infestans (strain T30-4) (Potato late blight agent).